The following is a 371-amino-acid chain: Probable inactive methyltransferase Os04g0175900 (371 aa).

Substrate is bound at residue 137 to 143 (LDVDEDN). The substrate binding stretch occupies residues 170 to 188 (LFEYMGTNHRFNMLFNQAM). The S-adenosyl-L-methionine site is built by Gly216, Asp239, Met260, and Lys273.

It belongs to the class I-like SAM-binding methyltransferase superfamily. Cation-independent O-methyltransferase family. COMT subfamily.

The sequence is that of Probable inactive methyltransferase Os04g0175900 from Oryza sativa subsp. japonica (Rice).